The sequence spans 104 residues: Ribonuclease P protein component 4 (104 aa).

Residues C57, C60, C83, and C86 each coordinate Zn(2+).

It belongs to the eukaryotic/archaeal RNase P protein component 4 family. In terms of assembly, consists of a catalytic RNA component and at least 4-5 protein subunits. Zn(2+) is required as a cofactor.

Its subcellular location is the cytoplasm. It carries out the reaction Endonucleolytic cleavage of RNA, removing 5'-extranucleotides from tRNA precursor.. Its function is as follows. Part of ribonuclease P, a protein complex that generates mature tRNA molecules by cleaving their 5'-ends. This Saccharolobus islandicus (strain L.S.2.15 / Lassen #1) (Sulfolobus islandicus) protein is Ribonuclease P protein component 4.